A 142-amino-acid chain; its full sequence is MHELSVAQSVLETVLDVARKRGAERVLSVRLRIGEFTLLNPEQLRFCLEVLAEGTPVEGAKFEIEIERGYFKCAECGHRWRPEDESLKDPSLHTAFDLSELTELLDLKCPKCGSRAVKLDGGDACSIESVRLEVPGEQHAQG.

Histidine 2 serves as a coordination point for Ni(2+). Positions 73, 76, 109, and 112 each coordinate Zn(2+).

The protein belongs to the HypA/HybF family.

Its function is as follows. Involved in the maturation of [NiFe] hydrogenases. Required for nickel insertion into the metal center of the hydrogenase. The protein is Hydrogenase maturation factor HypA of Methanopyrus kandleri (strain AV19 / DSM 6324 / JCM 9639 / NBRC 100938).